The primary structure comprises 1620 residues: Myb-like protein X (1620 aa).

A compositionally biased stretch (polar residues) spans 1–13; sequence MSTIGNNASSIGN. 4 disordered regions span residues 1–57, 176–204, 294–318, and 450–849; these read MSTI…TTTT, TGSG…SNIG, FFQD…NMTE, and KEEK…TKSA. Positions 28-57 are enriched in low complexity; it reads PPTTTTTTTTTTTTTTTTPTTTTPTTTTTT. Residues 177 to 187 show a composition bias toward gly residues; sequence GSGGIGGGGSG. An SWIRM domain is found at 310–421; sequence GSGSNNMTEI…CFVNSGDYMN (112 aa). Positions 450–497 are enriched in basic and acidic residues; sequence KEEKERLEREEKERLEREEKQEKEEKERLEKEEKERLEREEKQEKEEK. Positions 498 to 511 are enriched in acidic residues; sequence EEKEEKEENEEKEE. The span at 512–568 shows a compositional bias: basic and acidic residues; it reads KEEKEKEEKEEKEKQEKEDDKEKQENENEQEKIEKKENKNDSQNKEIKENHDKKDET. The segment covering 570–598 has biased composition (low complexity); it reads DSNNTTTTTTTTTTTSTNTLVAESSSSSS. The span at 606-628 shows a compositional bias: basic and acidic residues; sequence KEMKEQPVQENKDKEMMETDTTK. The segment covering 629–645 has biased composition (low complexity); sequence ENNGVETTETTNQTTDS. Residues 647–798 are compositionally biased toward basic and acidic residues; sequence ETDKEMKDQP…EIKKDKLKEN (152 aa). The span at 799–834 shows a compositional bias: acidic residues; it reads EEVEGEIEGENDEGEVVEEDEDEEMEIEEDEEDEED. The SANT domain maps to 925–977; the sequence is PEEFGWTDIETLLLLEGIEIFRDNWQEISDYIGGSKTPEQCLTHFIRLPIEDE. The tract at residues 1049–1506 is disordered; it reads QPSKEELERI…DDDEDVEMET (458 aa). Composition is skewed to basic and acidic residues over residues 1051–1195, 1219–1255, and 1264–1302; these read SKEE…DKSD, ETVE…KDDN, and HNKE…EKDL. Residues 1303 to 1325 are compositionally biased toward low complexity; that stretch reads NNLSESQSSNDQSKSNEQMSSDN. Positions 1338–1350 are enriched in polar residues; it reads TQITSKEQNITTD. Low complexity-rich tracts occupy residues 1358-1382 and 1390-1416; these read TPTT…TTNT and NETN…ESNN. Acidic residues-rich tracts occupy residues 1467 to 1481 and 1493 to 1504; these read EENE…ENDL and VGEEDDDEDVEM.

The protein localises to the nucleus. In Dictyostelium discoideum (Social amoeba), this protein is Myb-like protein X (mybX).